The primary structure comprises 557 residues: Protein Red (557 aa).

A disordered region spans residues 1–84 (MPERDSEPFS…RKKKSYYAKL (84 aa)). Over residues 16-25 (DGHDVDDPHS) the composition is skewed to basic and acidic residues. A compositionally biased stretch (low complexity) spans 42 to 53 (TPRAAPTSAPPS). N6-acetyllysine occurs at positions 98 and 137. Lys-151 is covalently cross-linked (Glycyl lysine isopeptide (Lys-Gly) (interchain with G-Cter in SUMO2)). A disordered region spans residues 181-205 (KEKEEEELMEKPQKETKKDEDPENK). The residue at position 287 (Ser-287) is a Phosphoserine. A compositionally biased stretch (basic residues) spans 294–303 (RNKKLKKKDK). The segment at 294–402 (RNKKLKKKDK…PIDVDKGPGS (109 aa)) is disordered. Basic and acidic residues predominate over residues 304–313 (GKLEEKKPPE). Residues Lys-310 and Lys-331 each participate in a glycyl lysine isopeptide (Lys-Gly) (interchain with G-Cter in SUMO2) cross-link. Basic and acidic residues predominate over residues 332-398 (TPRDKERERY…VDDEPIDVDK (67 aa)). Repeat copies occupy residues 342–343 (RE), 344–345 (RE), 346–347 (RD), 348–349 (RE), 350–351 (RD), 352–353 (RD), 354–355 (RD), 356–357 (RE), 358–359 (RE), 360–361 (RE), 362–363 (RD), 364–365 (RE), 366–367 (RE), 368–369 (RE), 370–371 (RD), 372–373 (RE), and 374–375 (RE). The interval 342-375 (RERERDRERDRDRDRERERERDRERERERDRERE) is 17 X 2 AA tandem repeats of R-[ED]. Residues Lys-386, Lys-388, Lys-404, and Lys-408 each participate in a glycyl lysine isopeptide (Lys-Gly) (interchain with G-Cter in SUMO2) cross-link. Residues Ser-417 and Ser-460 each carry the phosphoserine modification. Position 485 is a phosphothreonine (Thr-485). Residues Lys-496, Lys-501, and Lys-509 each participate in a glycyl lysine isopeptide (Lys-Gly) (interchain with G-Cter in SUMO2) cross-link. Residue Ser-536 is modified to Phosphoserine. Glycyl lysine isopeptide (Lys-Gly) (interchain with G-Cter in SUMO2) cross-links involve residues Lys-541, Lys-543, Lys-544, and Lys-553.

This sequence belongs to the RED family. In terms of assembly, component of the spliceosome B complex. Interacts with SMU1. Interacts with MAD1L1. May interact with DHX15.

The protein localises to the nucleus. The protein resides in the nucleoplasm. Its subcellular location is the chromosome. It localises to the cytoplasm. It is found in the cytoskeleton. The protein localises to the spindle pole. Its function is as follows. Involved in pre-mRNA splicing as a component of the spliceosome. Auxiliary spliceosomal protein that regulates selection of alternative splice sites in a small set of target pre-mRNA species. Required for normal mitotic cell cycle progression. Recruits MAD1L1 and MAD2L1 to kinetochores, and is required to trigger the spindle assembly checkpoint. Required for normal accumulation of SMU1. The protein is Protein Red (IK) of Pongo abelii (Sumatran orangutan).